The sequence spans 202 residues: Urease accessory protein UreG (202 aa).

11–18 (GPVGSGKT) is a binding site for GTP.

It belongs to the SIMIBI class G3E GTPase family. UreG subfamily. Homodimer. UreD, UreF and UreG form a complex that acts as a GTP-hydrolysis-dependent molecular chaperone, activating the urease apoprotein by helping to assemble the nickel containing metallocenter of UreC. The UreE protein probably delivers the nickel.

The protein resides in the cytoplasm. Functionally, facilitates the functional incorporation of the urease nickel metallocenter. This process requires GTP hydrolysis, probably effectuated by UreG. This chain is Urease accessory protein UreG, found in Magnetococcus marinus (strain ATCC BAA-1437 / JCM 17883 / MC-1).